A 267-amino-acid polypeptide reads, in one-letter code: Neutrophil elastase (267 aa).

Positions methionine 1–alanine 27 are cleaved as a signal peptide. Residues serine 28 to glutamate 29 constitute a propeptide that is removed on maturation. One can recognise a Peptidase S1 domain in the interval isoleucine 30–glutamine 247. The cysteines at positions 55 and 71 are disulfide-linked. Histidine 70 acts as the Charge relay system in catalysis. N-linked (GlcNAc...) asparagine glycosylation is present at asparagine 88. Catalysis depends on aspartate 117, which acts as the Charge relay system. Asparagine 124 and asparagine 173 each carry an N-linked (GlcNAc...) asparagine glycan. 3 disulfide bridges follow: cysteine 151–cysteine 208, cysteine 181–cysteine 187, and cysteine 198–cysteine 223. Residue serine 202 is the Charge relay system of the active site.

Belongs to the peptidase S1 family. Elastase subfamily. As to quaternary structure, interacts with NOTCH2NL. Interacts with agaphelin, an antihemostatic protein from Anopheles gambiae. In terms of tissue distribution, bone marrow cells. Neutrophil.

It is found in the cytoplasmic vesicle. Its subcellular location is the phagosome. The catalysed reaction is Hydrolysis of proteins, including elastin. Preferential cleavage: Val-|-Xaa &gt; Ala-|-Xaa.. In terms of biological role, serine protease that modifies the functions of natural killer cells, monocytes and granulocytes. Inhibits C5a-dependent neutrophil enzyme release and chemotaxis. Promotes cleavage of GSDMB, thereby inhibiting pyroptosis. Promotes blood coagulation. Through the activation of the platelet fibrinogen receptor integrin alpha-IIb/beta-3, potentiates platelet aggregation induced by a threshold concentration of cathepsin G (CTSG). Cleaves and thus inactivates tissue factor pathway inhibitor (TFPI). Capable of killing E.coli but not S.aureus in vitro; digests outer membrane protein A (ompA) in E.coli and K.pneumoniae. The polypeptide is Neutrophil elastase (ELANE) (Homo sapiens (Human)).